The primary structure comprises 678 residues: ATP-dependent RNA helicase DHX58 (678 aa).

Positions 11–188 (IMPALEGKNI…DGAINHVLQL (178 aa)) constitute a Helicase ATP-binding domain. 24–31 (LPTGAGKT) serves as a coordination point for ATP. The short motif at 131-134 (DECH) is the DECH box element. A Helicase C-terminal domain is found at 350–514 (KLEMLEKILQ…QAVAAVQKMD (165 aa)). The stretch at 489-546 (ELKRELINEALETLMEQAVAAVQKMDQAEYQAKIRDLQQAALTKRAAQAAQRENQRQQ) forms a coiled coil. The RLR CTR domain maps to 539–669 (QRENQRQQFP…PDFDFLQHCA (131 aa)). Cys-556, Cys-559, Cys-612, and Cys-615 together coordinate Zn(2+). An RNA-binding region spans residues 572 to 655 (VEGTHHVNVN…RIQAKKWSRV (84 aa)).

It belongs to the helicase family. RLR subfamily. Monomer in the absence of dsRNA. Homodimer in the presence of dsRNA. Interacts with RIGI (via CARD domain), MAVS/IPS1 and DDX60. Found in a complex with RIGI and IFIH1/MDA5. Interacts with ANKRD17. Directly interacts with ATG5 and ATG12, either as ATG5 and ATG12 monomers or as ATG12-ATG5 conjugates. In terms of assembly, (Microbial infection) Interacts (via helicase C-terminal domain) with non-structural protein V of paramyxoviruses including human parainfluenza 2 virus, human parainfluenza 5 virus, measles virus, mumps virus, hendra virus and nipah virus. Expressed in testis, nerve and spleen. Also expressed in the brain.

It is found in the cytoplasm. The enzyme catalyses ATP + H2O = ADP + phosphate + H(+). Acts as a regulator of RIGI and IFIH1/MDA5 mediated antiviral signaling. Cannot initiate antiviral signaling as it lacks the CARD domain required for activating MAVS/IPS1-dependent signaling events. Can have both negative and positive regulatory functions related to RIGI and IFIH1/MDA5 signaling and this role in regulating signaling may be complex and could probably depend on characteristics of the infecting virus or target cells, or both. Its inhibitory action on RIG-I signaling may involve the following mechanisms: competition with RIGI for binding to the viral RNA, binding to RIGI and inhibiting its dimerization and interaction with MAVS/IPS1, competing with IKBKE in its binding to MAVS/IPS1 thereby inhibiting activation of interferon regulatory factor 3 (IRF3). Its positive regulatory role may involve unwinding or stripping nucleoproteins of viral RNA thereby facilitating their recognition by RIGI and IFIH1/MDA5. Involved in the innate immune response to various RNA viruses and some DNA viruses such as poxviruses and coronavirus SARS-CoV-2, and also to the bacterial pathogen Listeria monocytogenes. Can bind both ssRNA and dsRNA, with a higher affinity for dsRNA. Shows a preference to 5'-triphosphorylated RNA, although it can recognize RNA lacking a 5'-triphosphate. The sequence is that of ATP-dependent RNA helicase DHX58 from Homo sapiens (Human).